A 505-amino-acid chain; its full sequence is Maturase K (505 aa).

It belongs to the intron maturase 2 family. MatK subfamily.

The protein localises to the plastid. The protein resides in the chloroplast. Usually encoded in the trnK tRNA gene intron. Probably assists in splicing its own and other chloroplast group II introns. In Gomphrena pulchella (Globe amaranth), this protein is Maturase K.